Consider the following 552-residue polypeptide: 5'-AMP-activated protein kinase catalytic subunit alpha-2 (552 aa).

The 253-residue stretch at Tyr16–Phe268 folds into the Protein kinase domain. ATP contacts are provided by residues Leu22–Val30 and Lys45. The active-site Proton acceptor is Asp139. Thr172 is subject to Phosphothreonine; by LKB1 and CaMKK2. Phosphothreonine is present on Thr258. An AIS region spans residues Glu291–Asp376. Position 377 is a phosphoserine (Ser377). The interval Glu478–Leu520 is disordered. Residues Arg480–Cys490 are compositionally biased toward polar residues. Ser491 is subject to Phosphoserine. The span at Ser501–His510 shows a compositional bias: polar residues. The span at Ser511–Leu520 shows a compositional bias: low complexity.

Belongs to the protein kinase superfamily. CAMK Ser/Thr protein kinase family. SNF1 subfamily. As to quaternary structure, AMPK is a heterotrimer of an alpha catalytic subunit (PRKAA1 or PRKAA2), a beta (PRKAB1 or PRKAB2) and a gamma non-catalytic subunits (PRKAG1, PRKAG2 or PRKAG3). Interacts with FNIP1 and FNIP2. Associates with internalized INSR complexes on Golgi/endosomal membranes; PRKAA2/AMPK2 together with ATIC and HACD3/PTPLAD1 is proposed to be part of a signaling network regulating INSR autophosphorylation and endocytosis. Interacts with DUSP29. Interacts with ARF6. The phosphorylated form at Thr-172 mediated by CamKK2 interacts with ACSS2. Mg(2+) is required as a cofactor. Post-translationally, ubiquitinated. Phosphorylated at Thr-172 by STK11/LKB1 in complex with STE20-related adapter-alpha (STRADA) pseudo kinase and CAB39. Also phosphorylated at Thr-172 by CAMKK2; triggered by a rise in intracellular calcium ions, without detectable changes in the AMP/ATP ratio. CAMKK1 can also phosphorylate Thr-172, but at much lower level. Dephosphorylated by protein phosphatase 2A and 2C (PP2A and PP2C). Phosphorylated by ULK1; leading to negatively regulate AMPK activity and suggesting the existence of a regulatory feedback loop between ULK1 and AMPK. Dephosphorylated by PPM1A and PPM1B at Thr-172 (mediated by STK11/LKB1). In terms of tissue distribution, skeletal muscle, lower levels in liver, heart and kidney.

It localises to the cytoplasm. The protein localises to the nucleus. It carries out the reaction L-seryl-[protein] + ATP = O-phospho-L-seryl-[protein] + ADP + H(+). The enzyme catalyses L-threonyl-[protein] + ATP = O-phospho-L-threonyl-[protein] + ADP + H(+). The catalysed reaction is L-seryl-[acetyl-CoA carboxylase] + ATP = O-phospho-L-seryl-[acetyl-CoA carboxylase] + ADP + H(+). It catalyses the reaction L-seryl-[3-hydroxy-3-methylglutaryl-coenzyme A reductase] + ATP = O-phospho-L-seryl-[3-hydroxy-3-methylglutaryl-coenzyme A reductase] + ADP + H(+). With respect to regulation, activated by phosphorylation on Thr-172. Binding of AMP to non-catalytic gamma subunit (PRKAG1, PRKAG2 or PRKAG3) results in allosteric activation, inducing phosphorylation on Thr-172. AMP-binding to gamma subunit also sustains activity by preventing dephosphorylation of Thr-172. ADP also stimulates Thr-172 phosphorylation, without stimulating already phosphorylated AMPK. ATP promotes dephosphorylation of Thr-172, rendering the enzyme inactive. Under physiological conditions AMPK mainly exists in its inactive form in complex with ATP, which is much more abundant than AMP. Selectively inhibited by compound C (6-[4-(2-Piperidin-1-yl-ethoxy)-phenyl)]-3-pyridin-4-yl-pyyrazolo[1,5-a] pyrimidine. Activated by resveratrol, a natural polyphenol present in red wine, and S17834, a synthetic polyphenol. Salicylate/aspirin directly activates kinase activity, primarily by inhibiting Thr-172 dephosphorylation. Its function is as follows. Catalytic subunit of AMP-activated protein kinase (AMPK), an energy sensor protein kinase that plays a key role in regulating cellular energy metabolism. In response to reduction of intracellular ATP levels, AMPK activates energy-producing pathways and inhibits energy-consuming processes: inhibits protein, carbohydrate and lipid biosynthesis, as well as cell growth and proliferation. AMPK acts via direct phosphorylation of metabolic enzymes, and by longer-term effects via phosphorylation of transcription regulators. Regulates lipid synthesis by phosphorylating and inactivating lipid metabolic enzymes such as ACACA, ACACB, GYS1, HMGCR and LIPE; regulates fatty acid and cholesterol synthesis by phosphorylating acetyl-CoA carboxylase (ACACA and ACACB) and hormone-sensitive lipase (LIPE) enzymes, respectively. Promotes lipolysis of lipid droplets by mediating phosphorylation of isoform 1 of CHKA (CHKalpha2). Regulates insulin-signaling and glycolysis by phosphorylating IRS1, PFKFB2 and PFKFB3. Involved in insulin receptor/INSR internalization. AMPK stimulates glucose uptake in muscle by increasing the translocation of the glucose transporter SLC2A4/GLUT4 to the plasma membrane, possibly by mediating phosphorylation of TBC1D4/AS160. Regulates transcription and chromatin structure by phosphorylating transcription regulators involved in energy metabolism such as CRTC2/TORC2, FOXO3, histone H2B, HDAC5, MEF2C, MLXIPL/ChREBP, EP300, HNF4A, p53/TP53, SREBF1, SREBF2 and PPARGC1A. Acts as a key regulator of glucose homeostasis in liver by phosphorylating CRTC2/TORC2, leading to CRTC2/TORC2 sequestration in the cytoplasm. In response to stress, phosphorylates 'Ser-36' of histone H2B (H2BS36ph), leading to promote transcription. Acts as a key regulator of cell growth and proliferation by phosphorylating FNIP1, TSC2, RPTOR, WDR24 and ATG1/ULK1: in response to nutrient limitation, negatively regulates the mTORC1 complex by phosphorylating RPTOR component of the mTORC1 complex and by phosphorylating and activating TSC2. Also phosphorylates and inhibits GATOR2 subunit WDR24 in response to nutrient limitation, leading to suppress glucose-mediated mTORC1 activation. In response to energetic stress, phosphorylates FNIP1, inactivating the non-canonical mTORC1 signaling, thereby promoting nuclear translocation of TFEB and TFE3, and inducing transcription of lysosomal or autophagy genes. In response to nutrient limitation, promotes autophagy by phosphorylating and activating ATG1/ULK1. In that process, it also activates WDR45/WIPI4. Phosphorylates CASP6, thereby preventing its autoprocessing and subsequent activation. AMPK also acts as a regulator of circadian rhythm by mediating phosphorylation of CRY1, leading to destabilize it. May regulate the Wnt signaling pathway by phosphorylating CTNNB1, leading to stabilize it. Also acts as a regulator of cellular polarity by remodeling the actin cytoskeleton; probably by indirectly activating myosin. Also phosphorylates CFTR, EEF2K, KLC1, NOS3 and SLC12A1. Plays an important role in the differential regulation of pro-autophagy (composed of PIK3C3, BECN1, PIK3R4 and UVRAG or ATG14) and non-autophagy (composed of PIK3C3, BECN1 and PIK3R4) complexes, in response to glucose starvation. Can inhibit the non-autophagy complex by phosphorylating PIK3C3 and can activate the pro-autophagy complex by phosphorylating BECN1. Upon glucose starvation, promotes ARF6 activation in a kinase-independent manner leading to cell migration. Upon glucose deprivation mediates the phosphorylation of ACSS2 at 'Ser-659', which exposes the nuclear localization signal of ACSS2, required for its interaction with KPNA1 and nuclear translocation. Upon stress, regulates mitochondrial fragmentation through phosphorylation of MTFR1L. This Rattus norvegicus (Rat) protein is 5'-AMP-activated protein kinase catalytic subunit alpha-2 (Prkaa2).